The primary structure comprises 244 residues: Probable ABC transporter ATP-binding protein in ycf23-apcF intergenic region (244 aa).

Residues 9-241 (LEINNLTVSY…KLSTLFGEHI (233 aa)) form the ABC transporter domain. 41–48 (GPNGAGKS) lines the ATP pocket.

The protein belongs to the ABC transporter superfamily.

The protein resides in the plastid. It localises to the cyanelle. This Cyanophora paradoxa protein is Probable ABC transporter ATP-binding protein in ycf23-apcF intergenic region.